Consider the following 348-residue polypeptide: Protein RecA (348 aa).

Position 71-78 (71-78 (GVESSGKT)) interacts with ATP.

Belongs to the RecA family.

Its subcellular location is the cytoplasm. Can catalyze the hydrolysis of ATP in the presence of single-stranded DNA, the ATP-dependent uptake of single-stranded DNA by duplex DNA, and the ATP-dependent hybridization of homologous single-stranded DNAs. It interacts with LexA causing its activation and leading to its autocatalytic cleavage. The protein is Protein RecA of Aquifex pyrophilus.